The following is a 101-amino-acid chain: MAKKSKVARNEQRKQIVARYAARRAELKELIRKPSTPEADRAAAQAALQRLPRDASPVRLRNRDAADGRPRGHLRKFGLSRVRVREMAHRGELPGVHKSSW.

The disordered stretch occupies residues 31 to 74; sequence IRKPSTPEADRAAAQAALQRLPRDASPVRLRNRDAADGRPRGHL. Basic and acidic residues predominate over residues 61-70; sequence RNRDAADGRP.

It belongs to the universal ribosomal protein uS14 family. Part of the 30S ribosomal subunit. Contacts proteins S3 and S10.

Functionally, binds 16S rRNA, required for the assembly of 30S particles and may also be responsible for determining the conformation of the 16S rRNA at the A site. This Nocardia farcinica (strain IFM 10152) protein is Small ribosomal subunit protein uS14A.